The sequence spans 173 residues: NADH-ubiquinone oxidoreductase chain 6 (173 aa).

The next 5 membrane-spanning stretches (helical) occupy residues M1–S21, P25–G45, L53–L73, V87–G107, and L139–L159.

It belongs to the complex I subunit 6 family.

The protein localises to the mitochondrion membrane. The catalysed reaction is a ubiquinone + NADH + 5 H(+)(in) = a ubiquinol + NAD(+) + 4 H(+)(out). In terms of biological role, core subunit of the mitochondrial membrane respiratory chain NADH dehydrogenase (Complex I) that is believed to belong to the minimal assembly required for catalysis. Complex I functions in the transfer of electrons from NADH to the respiratory chain. The immediate electron acceptor for the enzyme is believed to be ubiquinone. The sequence is that of NADH-ubiquinone oxidoreductase chain 6 (MT-ND6) from Gadus morhua (Atlantic cod).